A 704-amino-acid chain; its full sequence is G-protein coupled receptor-associated protein LMBRD2B (704 aa).

At 1–3 the chain is on the extracellular side; sequence MSG. A helical membrane pass occupies residues 4-21; the sequence is AALGIEIVVVFFLALFLL. Residues 22 to 33 are Cytoplasmic-facing; sequence HRYGDFKKQQRM. A helical membrane pass occupies residues 34–54; the sequence is VLFGTLLAWYLCFLIVFILPL. Residues 55-111 are Extracellular-facing; the sequence is DVSTTIYNQCLIDQEAQTQTPSVSPVLSEQTTANASISPAKSTQRVCYKPWSYIPDG. N-linked (GlcNAc...) asparagine glycosylation is present at asparagine 88. The chain crosses the membrane as a helical span at residues 112-132; sequence IMPVFWRVVYWTSQCLTWLLL. Topologically, residues 133-157 are cytoplasmic; it reads PFMQSYARSGGFTITGKIKTALIEN. The chain crosses the membrane as a helical span at residues 158–178; it reads AIYYGTYLFIFGSLLIYVAVH. Topologically, residues 179–192 are extracellular; the sequence is PQWHLSWYELQTIG. The helical transmembrane segment at 193–213 threads the bilayer; that stretch reads ITAANTWGLFLLVLLLGYGLV. At 214–393 the chain is on the cytoplasmic side; it reads DIPRSYWEAS…ECLLKQWFYR (180 aa). Positions 235-266 form a coiled coil; the sequence is KAAKLMTEKADSEENLEDVMEEVRKINESIKY. Residues 394 to 414 traverse the membrane as a helical segment; that stretch reads VLAVVLALFSVAVVWSECTFF. At 415–438 the chain is on the extracellular side; the sequence is STHPVLSLFAVFIQLAERDYNYLY. The chain crosses the membrane as a helical span at residues 439–459; the sequence is IEMACFITIFFLCTCVYSTVF. Topologically, residues 460 to 481 are cytoplasmic; that stretch reads RIRVFNYYYLASHHQTDAYSLQ. Residues 482 to 502 form a helical membrane-spanning segment; that stretch reads FSGMLFCRLTPPLCLNFLGLI. Residues 503–527 are Extracellular-facing; the sequence is HMDSAISHQAKKQTAYTSIMGSMRV. The helical transmembrane segment at 528–548 threads the bilayer; that stretch reads LSFIANGFYIYYPMLIVVLCI. At 549 to 704 the chain is on the cytoplasmic side; the sequence is ATYFSLGTRC…SSRNRIFDDV (156 aa). The stretch at 576–612 forms a coiled coil; sequence DLIDEGRELLRRERRKRQRIEDGENRRREWRERYAQR. Disordered regions lie at residues 613 to 654 and 672 to 704; these read DENA…QSGR and TLTD…FDDV. Residues 631 to 654 show a composition bias toward polar residues; the sequence is YGETLNANTNRQAKYTRSGSQSGR.

It belongs to the LIMR family.

Its subcellular location is the cell membrane. May associate with G-protein coupled receptors and regulate downstream signaling pathways. This is G-protein coupled receptor-associated protein LMBRD2B (lmbrd2b) from Danio rerio (Zebrafish).